The chain runs to 356 residues: tRNA (guanine(26)-N(2))-dimethyltransferase (356 aa).

The 348-residue stretch at 5–352 (VLRREGTVEF…VSAGEVERVL (348 aa)) folds into the Trm1 methyltransferase domain. The S-adenosyl-L-methionine site is built by Arg40, Arg67, Asp85, Asp111, and Ala112.

This sequence belongs to the class I-like SAM-binding methyltransferase superfamily. Trm1 family.

The catalysed reaction is guanosine(26) in tRNA + 2 S-adenosyl-L-methionine = N(2)-dimethylguanosine(26) in tRNA + 2 S-adenosyl-L-homocysteine + 2 H(+). Dimethylates a single guanine residue at position 26 of a number of tRNAs using S-adenosyl-L-methionine as donor of the methyl groups. The polypeptide is tRNA (guanine(26)-N(2))-dimethyltransferase (Pyrobaculum arsenaticum (strain DSM 13514 / JCM 11321 / PZ6)).